The sequence spans 435 residues: MSFDSLSPQELAALHARHQQDYAALQGMKLALDLTRGKPSAEQLDLSNQLLSLPGDDYRDPEGTDTRNYGGQHGLPGLRAIFAELLGIAVPNLIAGNNSSLELMHDIVAFSMLYGGVDSPRPWIQEQDGIKFLCPVPGYDRHFAITETMGIEMIPIPMLQDGPDVDLIEELVAVDPAIKGMWTVPVFGNPSGVTYSWETVRRLVQMRTAAPDFRLFWDNAYAVHTLTLDFPRQVDVLGLAAKAGNPNRPYVFASTSKITFAGGGVSFFGGSLGNIAWYLQYAGKKSIGPDKVNQLRHLRFFGDADGVRLHMLRHQQILAPKFALVAEVLDQRLSESKIASWTEPKGGYFISLDVLPGTARRTVALAKDVGIAVTEAGASFPYRKDPDDKNIRIAPSFPSVPDLRNAVDGLATCALLAATETLLNQGLASSAPNVR.

Pyridoxal 5'-phosphate is bound by residues Tyr-69 and Ser-100–Leu-101. Tyr-139–Arg-141 is a binding site for substrate. Residues Asn-189, Tyr-221, and Ser-254–Ser-256 contribute to the pyridoxal 5'-phosphate site. Residue Arg-392 participates in substrate binding.

This sequence belongs to the class-I pyridoxal-phosphate-dependent aminotransferase family. Pyridoxal 5'-phosphate serves as cofactor.

The enzyme catalyses L-aspartate + 2-oxoglutarate = oxaloacetate + L-glutamate. Functionally, main aspartate aminotransferase that couples nitrogen assimilation to aspartate synthesis. Has a weak, but significant, side activity toward kynurenine (Kyn). Oxaloacetate and 2-oxoglutarate, but not pyruvate, serve as amino acceptors, while Asp, Glu and Kyn serve as the best amino donors. Essential for axenic growth and survival of M.tuberculosis in macrophages and in mice. The sequence is that of Aspartate aminotransferase from Mycobacterium tuberculosis (strain ATCC 25618 / H37Rv).